Here is a 677-residue protein sequence, read N- to C-terminus: Methionine--tRNA ligase (677 aa).

The 'HIGH' region motif lies at 15 to 25 (PYANGSIHLGH). 4 residues coordinate Zn(2+): C146, C149, C159, and C162. A 'KMSKS' region motif is present at residues 333–337 (KMSKS). K336 is an ATP binding site. The region spanning 575 to 677 (DFAKIDLRVA…DGAKPGQQVK (103 aa)) is the tRNA-binding domain.

The protein belongs to the class-I aminoacyl-tRNA synthetase family. MetG type 1 subfamily. In terms of assembly, homodimer. The cofactor is Zn(2+).

Its subcellular location is the cytoplasm. The enzyme catalyses tRNA(Met) + L-methionine + ATP = L-methionyl-tRNA(Met) + AMP + diphosphate. In terms of biological role, is required not only for elongation of protein synthesis but also for the initiation of all mRNA translation through initiator tRNA(fMet) aminoacylation. This Salmonella agona (strain SL483) protein is Methionine--tRNA ligase.